A 450-amino-acid chain; its full sequence is Biotin carboxylase 1 (450 aa).

In terms of domain architecture, Biotin carboxylation spans 1–447 (MIKKLLIANR…NTKFLETYDV (447 aa)). ATP-binding positions include Lys116, Lys158, 164–165 (GG), 200–203 (EKYI), and His208. One can recognise an ATP-grasp domain in the interval 120–318 (RETMKQAGVP…LIKEQIKVAS (199 aa)). Residue Lys237 coordinates hydrogencarbonate. ATP-binding residues include Glu275 and Glu289. 3 residues coordinate Mg(2+): Glu275, Glu289, and Asn291. Positions 275, 289, and 291 each coordinate Mn(2+). 3 residues coordinate hydrogencarbonate: Arg293, Val296, and Arg339. Arg293 is an active-site residue. Arg339 is a biotin binding site.

In terms of assembly, acetyl-CoA carboxylase is a heterohexamer of biotin carboxyl carrier protein, biotin carboxylase and the two subunits of carboxyl transferase in a 2:2 complex. Mg(2+) is required as a cofactor. Requires Mn(2+) as cofactor.

It carries out the reaction N(6)-biotinyl-L-lysyl-[protein] + hydrogencarbonate + ATP = N(6)-carboxybiotinyl-L-lysyl-[protein] + ADP + phosphate + H(+). It functions in the pathway lipid metabolism; malonyl-CoA biosynthesis; malonyl-CoA from acetyl-CoA: step 1/1. Its function is as follows. This protein is a component of the acetyl coenzyme A carboxylase complex; first, biotin carboxylase catalyzes the carboxylation of the carrier protein and then the transcarboxylase transfers the carboxyl group to form malonyl-CoA. This is Biotin carboxylase 1 (accC1) from Bacillus subtilis (strain 168).